The chain runs to 158 residues: MNPIIDLQIASENSQGLPSAQQFSDWVKHALTYEAQTSNIPLTELTIRIVDEAESHHLNLTYRGKDKPTNVLSFPFEVPEGIELPLLGDLIICRQIVEKEALEQKISLDAHWAHLTIHGTLHLLGYDHIDEHEAEQMEGLESDIMQQLGFQDPYLAEK.

Residues histidine 118, histidine 122, and histidine 128 each coordinate Zn(2+).

The protein belongs to the endoribonuclease YbeY family. Requires Zn(2+) as cofactor.

It is found in the cytoplasm. Its function is as follows. Single strand-specific metallo-endoribonuclease involved in late-stage 70S ribosome quality control and in maturation of the 3' terminus of the 16S rRNA. This is Endoribonuclease YbeY from Haemophilus ducreyi (strain 35000HP / ATCC 700724).